Reading from the N-terminus, the 26-residue chain is Acetylcholine receptor subunit delta (26 aa).

It belongs to the ligand-gated ion channel (TC 1.A.9) family. Acetylcholine receptor (TC 1.A.9.1) subfamily. As to quaternary structure, pentamer of two alpha chains, and one each of the beta, delta, and gamma chains.

Its subcellular location is the postsynaptic cell membrane. It localises to the cell membrane. It catalyses the reaction K(+)(in) = K(+)(out). The catalysed reaction is Na(+)(in) = Na(+)(out). Its function is as follows. After binding acetylcholine, the AChR responds by an extensive change in conformation that affects all subunits and leads to opening of an ion-conducting channel across the plasma membrane. This is Acetylcholine receptor subunit delta (chrnd) from Electrophorus electricus (Electric eel).